The sequence spans 184 residues: Oligoribonuclease (184 aa).

One can recognise an Exonuclease domain in the interval 9–172; it reads LIWIDLEMTG…DDIRESIEEL (164 aa). The active site involves Tyr-130.

This sequence belongs to the oligoribonuclease family.

Its subcellular location is the cytoplasm. 3'-to-5' exoribonuclease specific for small oligoribonucleotides. The protein is Oligoribonuclease of Actinobacillus pleuropneumoniae serotype 5b (strain L20).